Here is a 243-residue protein sequence, read N- to C-terminus: NH(3)-dependent NAD(+) synthetase (243 aa).

Residue 31–38 (GVSGGIDS) coordinates ATP. Residue Asp-37 participates in Mg(2+) binding. Residue Arg-110 participates in deamido-NAD(+) binding. Thr-130 contacts ATP. Glu-135 contributes to the Mg(2+) binding site. Deamido-NAD(+) is bound by residues Lys-143 and Asp-150. ATP is bound by residues Lys-159 and Ser-181. 227 to 228 (HK) is a binding site for deamido-NAD(+).

It belongs to the NAD synthetase family. In terms of assembly, homodimer.

It catalyses the reaction deamido-NAD(+) + NH4(+) + ATP = AMP + diphosphate + NAD(+) + H(+). Its pathway is cofactor biosynthesis; NAD(+) biosynthesis; NAD(+) from deamido-NAD(+) (ammonia route): step 1/1. Catalyzes the ATP-dependent amidation of deamido-NAD to form NAD. Uses ammonia as a nitrogen source. The sequence is that of NH(3)-dependent NAD(+) synthetase from Malacoplasma penetrans (strain HF-2) (Mycoplasma penetrans).